A 416-amino-acid chain; its full sequence is MFSKSVTLAQYDPDLAAAIAQEDQRQQDHVELIASENYVSCAVMEAQGSQLTNKYAEGYPGKRYYGGCEYVDIVEQLAIDRVKKLFGAQYANVQPHSGSQANQAVYASVLKPGDTILGMSLAHGGHLTHGASVNISGKLYNAVTYGLDENEVLDYAEVERLALEHKPKMIVAGASAYALQIDWAKFREIADKVGAYLFVDMAHYAGLVAGGEYPNPVPFCDFVTTTTHKTLRGPRGGVILCRDNTHEKALNSSIFPSLQGGPLMHVIAAKAVAFKEALQPEFKQYAKQVKINAAAMAEELVKRGLRIVSGRTESHVFLVDLQPMKITGKAAEAALGKAHITVNKNAIPNDPEKPFVTSGIRIGSAAMTTRGFNEADARVLANLVADVLSNPEDEANLAKVREQVTALCNKYPVYGA.

(6S)-5,6,7,8-tetrahydrofolate-binding positions include Leu-121 and 125-127 (GHL). Position 229 is an N6-(pyridoxal phosphate)lysine (Lys-229).

This sequence belongs to the SHMT family. In terms of assembly, homodimer. Pyridoxal 5'-phosphate is required as a cofactor.

It is found in the cytoplasm. It catalyses the reaction (6R)-5,10-methylene-5,6,7,8-tetrahydrofolate + glycine + H2O = (6S)-5,6,7,8-tetrahydrofolate + L-serine. It participates in one-carbon metabolism; tetrahydrofolate interconversion. Its pathway is amino-acid biosynthesis; glycine biosynthesis; glycine from L-serine: step 1/1. In terms of biological role, catalyzes the reversible interconversion of serine and glycine with tetrahydrofolate (THF) serving as the one-carbon carrier. This reaction serves as the major source of one-carbon groups required for the biosynthesis of purines, thymidylate, methionine, and other important biomolecules. Also exhibits THF-independent aldolase activity toward beta-hydroxyamino acids, producing glycine and aldehydes, via a retro-aldol mechanism. This Neisseria meningitidis serogroup A / serotype 4A (strain DSM 15465 / Z2491) protein is Serine hydroxymethyltransferase.